Consider the following 645-residue polypeptide: Sodium-dependent nutrient amino acid transporter 1 (645 aa).

The interval Met1–Gly48 is disordered. At Met1–Asn51 the chain is on the cytoplasmic side. Low complexity predominate over residues Asn18–Asp32. Positions Thr33–Gly48 are enriched in basic and acidic residues. Helical transmembrane passes span Trp52–Val72, Gly85–Leu105, and Thr138–Val158. N-linked (GlcNAc...) asparagine glycosylation is found at Asn191 and Asn205. Helical transmembrane passes span Ile234 to Ile254, Ala264 to Val284, Ala313 to Ser333, Ile347 to Leu367, Leu407 to Leu427, Cys454 to Val474, and Thr480 to Leu500. An N-linked (GlcNAc...) asparagine glycan is attached at Asn514. A run of 2 helical transmembrane segments spans residues Cys522–Ile542 and Ala559–Ile579.

This sequence belongs to the sodium:neurotransmitter symporter (SNF) (TC 2.A.22) family.

It is found in the membrane. In terms of biological role, unusual broad substrate spectrum amino acid:sodium cotransporter that promotes absorption of the D isomers of essential amino acids. Neutral amino acids are the preferred substrates, especially methionine and phenylalanine. The polypeptide is Sodium-dependent nutrient amino acid transporter 1 (Drosophila mojavensis (Fruit fly)).